The primary structure comprises 103 residues: MKKEKLAMKFKSFDHKLVDDAVKKVLILASKEKIDYSGPIPLPTKREIFTILRSVHVNKKSREQFERRTYKRFIVFNNPGPKFVEILKRTEMPAGVEVEFKVK.

It belongs to the universal ribosomal protein uS10 family. In terms of assembly, part of the 30S ribosomal subunit.

In terms of biological role, involved in the binding of tRNA to the ribosomes. The protein is Small ribosomal subunit protein uS10 of Mycoplasmopsis pulmonis (strain UAB CTIP) (Mycoplasma pulmonis).